The sequence spans 122 residues: MTLKGALSVKFDVKCPADKFFSAFVEDTNRPFEKNGKTEIEAVDLVKKTMTIQMSGSEIQKYFKTLKGSIAVTPIGVGDGSHVVWTFHFEKVHKDIDDPHSIIDESVKYFKKLDEAILNFKE.

This is an uncharacterized protein from Arabidopsis thaliana (Mouse-ear cress).